The chain runs to 562 residues: MNNDKRPLYIPFAGPALLSTPLLNKGSAFSAEERISFNLEGLLPETTETIQEQVERAYMQYKAFESDMDKHIYLRNIQDTNETLFYRLVQNHITEMMPIIYTPTVGAACENFSNIYRRGRGLFVSYANRDRIDDILNNASNHNVKVIVVTDGERILGLGDQGIGGMGIPIGKLSLYTACGGISPAYTLPIVLDVGTNNPQRLADPMYMGWRHPRITGADYDAFVEEFIQAVQRRWPDALIQFEDFAQKNAMPLLERYKNRICCFNDDIQGTAAVTVGSLMAACQAAGSKLSEQRITFLGAGSAGCGIAEAIIAQMVSEGISDKKARSQVFMVDRWGLLQEGMPNLLDFQQRLVQKHSVTAKWETEANGFSLLDVVKNAKPTVLIGVSGAPGLFTQEVIQEMHKHCPRPIVFPLSNPTSRVEAVPADIIRWTNGDALVATGSPFDPVIHEGKTYPIVQCNNSYIFPGIGLGVLAVNAKRVTDEMLMESSRALATCSPLAINGKGALLPPLEEIHTVSKRIAYAVAKKAIEQGVALEIADDALQVAIEQHFWQPVYRRYKRTAF.

Tyr-101 functions as the Proton donor in the catalytic mechanism. Arg-154 lines the NAD(+) pocket. Lys-172 (proton acceptor) is an active-site residue. The a divalent metal cation site is built by Glu-243, Asp-244, and Asp-267. Residues Asp-267 and Asn-415 each coordinate NAD(+).

It belongs to the malic enzymes family. In terms of assembly, homotetramer. It depends on Mg(2+) as a cofactor. Mn(2+) serves as cofactor.

The enzyme catalyses (S)-malate + NAD(+) = pyruvate + CO2 + NADH. The catalysed reaction is oxaloacetate + H(+) = pyruvate + CO2. The polypeptide is NAD-dependent malic enzyme 1 (Vibrio vulnificus (strain YJ016)).